The primary structure comprises 430 residues: Serine--tRNA ligase (430 aa).

235–237 (TAE) provides a ligand contact to L-serine. Residues 266-268 (RRE) and V282 contribute to the ATP site. E289 is an L-serine binding site. 353–356 (EASS) contributes to the ATP binding site. S389 contacts L-serine.

Belongs to the class-II aminoacyl-tRNA synthetase family. Type-1 seryl-tRNA synthetase subfamily. As to quaternary structure, homodimer. The tRNA molecule binds across the dimer.

Its subcellular location is the cytoplasm. The enzyme catalyses tRNA(Ser) + L-serine + ATP = L-seryl-tRNA(Ser) + AMP + diphosphate + H(+). The catalysed reaction is tRNA(Sec) + L-serine + ATP = L-seryl-tRNA(Sec) + AMP + diphosphate + H(+). The protein operates within aminoacyl-tRNA biosynthesis; selenocysteinyl-tRNA(Sec) biosynthesis; L-seryl-tRNA(Sec) from L-serine and tRNA(Sec): step 1/1. Functionally, catalyzes the attachment of serine to tRNA(Ser). Is also able to aminoacylate tRNA(Sec) with serine, to form the misacylated tRNA L-seryl-tRNA(Sec), which will be further converted into selenocysteinyl-tRNA(Sec). The sequence is that of Serine--tRNA ligase from Chlorobium phaeovibrioides (strain DSM 265 / 1930) (Prosthecochloris vibrioformis (strain DSM 265)).